The chain runs to 441 residues: Mannose-6-phosphate isomerase (441 aa).

4 residues coordinate Zn(2+): glutamine 111, histidine 113, glutamate 138, and histidine 285. Residue arginine 304 is part of the active site.

This sequence belongs to the mannose-6-phosphate isomerase type 1 family. Monomer. Zn(2+) is required as a cofactor.

Its subcellular location is the cytoplasm. The catalysed reaction is D-mannose 6-phosphate = D-fructose 6-phosphate. Its pathway is nucleotide-sugar biosynthesis; GDP-alpha-D-mannose biosynthesis; alpha-D-mannose 1-phosphate from D-fructose 6-phosphate: step 1/2. Involved in the synthesis of the GDP-mannose and dolichol-phosphate-mannose required for a number of critical mannosyl transfer reactions. The sequence is that of Mannose-6-phosphate isomerase (PMI1) from Candida albicans (strain SC5314 / ATCC MYA-2876) (Yeast).